A 648-amino-acid chain; its full sequence is Threonine--tRNA ligase (648 aa).

Positions 1-63 constitute a TGS domain; the sequence is MTEINIEFPD…NENVKIEIVT (63 aa). A catalytic region spans residues 243 to 541; the sequence is DHRVIGNNLD…LIEMYKGAFP (299 aa). Positions 337, 388, and 518 each coordinate Zn(2+).

This sequence belongs to the class-II aminoacyl-tRNA synthetase family. As to quaternary structure, homodimer. It depends on Zn(2+) as a cofactor.

Its subcellular location is the cytoplasm. The catalysed reaction is tRNA(Thr) + L-threonine + ATP = L-threonyl-tRNA(Thr) + AMP + diphosphate + H(+). Catalyzes the attachment of threonine to tRNA(Thr) in a two-step reaction: L-threonine is first activated by ATP to form Thr-AMP and then transferred to the acceptor end of tRNA(Thr). Also edits incorrectly charged L-seryl-tRNA(Thr). The sequence is that of Threonine--tRNA ligase from Pediococcus pentosaceus (strain ATCC 25745 / CCUG 21536 / LMG 10740 / 183-1w).